Consider the following 273-residue polypeptide: Protein GMH1 (273 aa).

The disordered stretch occupies residues 1 to 33 (MSYLPTYSNDLPAGPQGQRRRNNGNENDARQGY). Serine 2 is modified (N-acetylserine). The Cytoplasmic portion of the chain corresponds to 2-89 (SYLPTYSNDL…QTKNQWARDD (88 aa)). A helical membrane pass occupies residues 90–110 (PSFFIFQIALISLSSIIWSIY). Residues 111 to 134 (NSGFNNDSDMGALSIIGHFFKSLV) lie on the Lumenal side of the membrane. Residues 135 to 155 (MMVILDFFIFGFIMATIFYLL) traverse the membrane as a helical segment. Residues 156–175 (LNRSHFKFKSSQNSVVEWAY) are Cytoplasmic-facing. A helical transmembrane segment spans residues 176-196 (CFDVHCNSFLIILLCLYFIQF). The Lumenal segment spans residues 197–216 (LLLPIINLQNWISLLIGNSL). A helical transmembrane segment spans residues 217-237 (YCFAIGHYFILTFYGYNQLPF). Topologically, residues 238-242 (LKNLN) are cytoplasmic. Residues 243-263 (FILLPTLGLSIIYLISLFGID) traverse the membrane as a helical segment. At 264–273 (LSKKLSFYNY) the chain is on the lumenal side.

This sequence belongs to the unc-50 family. As to quaternary structure, interacts with GEA1 and GEA2.

It localises to the golgi apparatus membrane. Its subcellular location is the endoplasmic reticulum membrane. The protein is Protein GMH1 (GMH1) of Saccharomyces cerevisiae (strain ATCC 204508 / S288c) (Baker's yeast).